Reading from the N-terminus, the 65-residue chain is Large ribosomal subunit protein bL32 (65 aa).

Residues 1-45 form a disordered region; sequence MAVQQNKKTPSKRGMRRAHDVLKKPTFSVDFSSGETHRRHHVTPD.

This sequence belongs to the bacterial ribosomal protein bL32 family.

The protein is Large ribosomal subunit protein bL32 of Nitrosococcus oceani (strain ATCC 19707 / BCRC 17464 / JCM 30415 / NCIMB 11848 / C-107).